The sequence spans 373 residues: Molybdenum import ATP-binding protein ModC (373 aa).

Residues 4–240 (LTPPTIRAAF…PKLPLAIARD (237 aa)) form the ABC transporter domain. 38-45 (GPSGCGKS) serves as a coordination point for ATP. Positions 299 to 369 (ASSILNAIAA…IKGVALAPGR (71 aa)) constitute a Mop domain.

It belongs to the ABC transporter superfamily. Molybdate importer (TC 3.A.1.8) family. As to quaternary structure, the complex is composed of two ATP-binding proteins (ModC), two transmembrane proteins (ModB) and a solute-binding protein (ModA).

It is found in the cell inner membrane. The enzyme catalyses molybdate(out) + ATP + H2O = molybdate(in) + ADP + phosphate + H(+). In terms of biological role, part of the ABC transporter complex ModABC involved in molybdenum import. Responsible for energy coupling to the transport system. In Rhodopseudomonas palustris (strain ATCC BAA-98 / CGA009), this protein is Molybdenum import ATP-binding protein ModC.